The sequence spans 100 residues: MEPIEVFKALSNESRLQILQWLKEPDRHFAPHEGIDMNTIGVCVSQITDKLKMTQSTASQYLTILLRAGLIKAERIGKYTYYKRDEEAIGKLADFLKTEI.

One can recognise an HTH arsR-type domain in the interval 1-100 (MEPIEVFKAL…KLADFLKTEI (100 aa)). The segment at residues 44 to 67 (VSQITDKLKMTQSTASQYLTILLR) is a DNA-binding region (H-T-H motif).

This is an uncharacterized protein from Bacillus subtilis (strain 168).